Consider the following 1215-residue polypeptide: Metabotropic glycine receptor (1215 aa).

Positions 1–23 (MGAMAYPLLLCLLLAQLGLGAVG) are cleaved as a signal peptide. The interval 23–66 (GASRDPQGRPDSPRERTPKGKPHAQQPGRASASDSSAPWSRSTD) is disordered. Over 24–417 (ASRDPQGRPD…CFVQEDKYLR (394 aa)) the chain is Extracellular. Over residues 28-40 (PQGRPDSPRERTP) the composition is skewed to basic and acidic residues. The span at 52–64 (ASASDSSAPWSRS) shows a compositional bias: low complexity. The interval 85 to 281 (YLYTGDSHQL…CENGSYKPGW (197 aa)) is cache-like region. 2 N-linked (GlcNAc...) asparagine glycosylation sites follow: Asn98 and Asn143. Cys99 and Cys272 form a disulfide bridge. The glycine site is built by Ser172 and Arg173. Asn215 carries N-linked (GlcNAc...) asparagine glycosylation. Position 271 (Glu271) interacts with glycine. N-linked (GlcNAc...) asparagine glycosylation occurs at Asn274. Asp307 is a glycine binding site. N-linked (GlcNAc...) asparagine glycosylation is present at Asn333. The helical transmembrane segment at 418-439 (LAIISFQALCMLLDFVSMLVVY) threads the bilayer. The Cytoplasmic portion of the chain corresponds to 440–451 (HFRKAKSIRASG). Residues 452-474 (LILLETILFGSLLLYFPVVILYF) traverse the membrane as a helical segment. At 475–478 (EPST) the chain is on the extracellular side. A helical membrane pass occupies residues 479–501 (FRCILLRWARLLGFATVYGTVTL). A disulfide bond links Cys481 and Cys573. Topologically, residues 502 to 525 (KLHRVLKVFLSRTAQRIPYMTGGR) are cytoplasmic. A helical transmembrane segment spans residues 526–547 (VMRMLAVILLVVFWFLIGWTSS). Residues 548–576 (VCQNLEKQISLIGQGKTSDHLIFNMCLID) are Extracellular-facing. Residues 577–597 (RWDYMTAVAEFLFLLWGVYLC) traverse the membrane as a helical segment. Residues 598–611 (YAVRTVPSAFHEPR) are Cytoplasmic-facing. Residues 612–633 (YMAVAVHNELIISAIFHTIRFV) form a helical membrane-spanning segment. Topologically, residues 634–642 (LASRLQSDW) are extracellular. The chain crosses the membrane as a helical span at residues 643–664 (MLMLYFAHTHLTVTVTIGLLLI). Residues 665-1215 (PKFSHSSNNP…KEEIWDSFKV (551 aa)) lie on the Cytoplasmic side of the membrane. Phosphoserine occurs at positions 694, 705, and 708. The tract at residues 757 to 999 (RITEIPETVS…LNPGTTQMKD (243 aa)) is disordered. Basic and acidic residues-rich tracts occupy residues 769–781 (CSKEDKEGADHGT) and 819–828 (STYDHVRDQT). Lys774 participates in a covalent cross-link: Glycyl lysine isopeptide (Lys-Gly) (interchain with G-Cter in ubiquitin). Ser865 is subject to Phosphoserine. A compositionally biased stretch (basic and acidic residues) spans 925–943 (VEERTKSQKPLPKDKETNR). Ser946 bears the Phosphoserine mark. Over residues 979–998 (QRVNPTTANSDLNPGTTQMK) the composition is skewed to polar residues. 2 consecutive short sequence motifs (VCPWE motif) follow at residues 1006–1010 (VCPWE) and 1071–1075 (VCLWE). Ser1080 is subject to Phosphoserine. A disordered region spans residues 1117 to 1164 (SEELPPKAVASKTENENLNQIGHQEKKTSSSEENVRGSYNSSNNFQQP). Residues 1139-1151 (HQEKKTSSSEENV) are compositionally biased toward basic and acidic residues. Residues 1153-1164 (GSYNSSNNFQQP) show a composition bias toward polar residues. A VCPWE motif 3 motif is present at residues 1171-1175 (VCPWE).

Belongs to the G-protein coupled receptor 3 family. As to quaternary structure, homodimer. Associates with the RGS7-GNB5 complex, promoting its localization to the cell membrane and regulating its GTPase activator activity. Interacts (via VCPWE motifs) with GNAO1. Interacts with GPC4. Interacts with EGFLAM.

The protein resides in the cell membrane. Its subcellular location is the postsynaptic cell membrane. It localises to the presynaptic cell membrane. It is found in the nucleus. In terms of biological role, metabotropic receptor for glycine that controls synapse formation and function in the brain. Acts as an atypical G-protein coupled receptor that recruits and regulates the RGS7-GNB5 complex instead of activating G proteins. In absence of glycine ligand, promotes the GTPase activator activity of RGS7, increasing the GTPase activity of G protein alpha subunits, thereby driving them into their inactive GDP-bound form. Glycine-binding changes the conformation of the intracellular surface, inhibiting the GTPase activator activity of the RGS7-GNB5 complex, promoting G protein alpha subunits into their active GTP-bound form and regulating cAMP levels. Also able to bind taurine, a compound closely related to glycine, but with a two-fold lower affinity. Glycine receptor-dependent regulation of cAMP controls key ion channels, kinases and neurotrophic factors involved in neuronal excitability and synaptic transmission. Plays a pivotal role in regulating mood and cognition via its ability to regulate neuronal excitability in L2/L3 pyramidal neurons of the prefrontal cortex. Also involved in spatial learning by regulating hippocampal CA1 neuronal excitability. Acts as a synaptic organizer in the hippocampus, required for proper mossy fiber-CA3 neurocircuitry establishment, structure and function: induces presynaptic differentiation in contacting axons via its interaction with GPC4. In addition to glycine, may also act as a receptor for osteocalcin (BGLAP) hormone: osteocalcin-binding initiates a signaling response that prevents neuronal apoptosis in the hippocampus and regulates the synthesis of neurotransmitters. The polypeptide is Metabotropic glycine receptor (Homo sapiens (Human)).